A 430-amino-acid chain; its full sequence is Serine--tRNA ligase (430 aa).

Residue 237–239 (TAE) participates in L-serine binding. 268-270 (RSE) contacts ATP. Residue E291 coordinates L-serine. An ATP-binding site is contributed by 355-358 (EISS). S391 contacts L-serine.

Belongs to the class-II aminoacyl-tRNA synthetase family. Type-1 seryl-tRNA synthetase subfamily. Homodimer. The tRNA molecule binds across the dimer.

It localises to the cytoplasm. It catalyses the reaction tRNA(Ser) + L-serine + ATP = L-seryl-tRNA(Ser) + AMP + diphosphate + H(+). The catalysed reaction is tRNA(Sec) + L-serine + ATP = L-seryl-tRNA(Sec) + AMP + diphosphate + H(+). It functions in the pathway aminoacyl-tRNA biosynthesis; selenocysteinyl-tRNA(Sec) biosynthesis; L-seryl-tRNA(Sec) from L-serine and tRNA(Sec): step 1/1. Functionally, catalyzes the attachment of serine to tRNA(Ser). Is also able to aminoacylate tRNA(Sec) with serine, to form the misacylated tRNA L-seryl-tRNA(Sec), which will be further converted into selenocysteinyl-tRNA(Sec). This chain is Serine--tRNA ligase, found in Yersinia enterocolitica serotype O:8 / biotype 1B (strain NCTC 13174 / 8081).